The sequence spans 406 residues: Histone-lysine N-methyltransferase SUV39H2 (406 aa).

Positions 43-101 (YEVEYLCDYRIEKGVEKFFVKWKGWPESCNTWEPTRNLKCPTLLKQFYSDLYNYFCALK) constitute a Chromo domain. A Pre-SET domain is found at 185-243 (VGCDCSDCFKGKCCPTEAGVLFAYNEHRQIKIPPGRPIYECNSRCKCGPDCPNRVVQKG). Residues Cys-187, Cys-189, Cys-192, Cys-197, Cys-198, Cys-225, Cys-229, Cys-231, and Cys-235 each contribute to the Zn(2+) site. The region spanning 246-369 (YSLCIFRTDN…AGEELTFDYQ (124 aa)) is the SET domain. S-adenosyl-L-methionine contacts are provided by residues 257–259 (RGW), Tyr-300, and 326–327 (NH). Zn(2+) is bound by residues Cys-329, Cys-394, Cys-396, and Cys-401. Residues 390–406 (VRIACKCGAATCRGYLN) enclose the Post-SET domain.

This sequence belongs to the class V-like SAM-binding methyltransferase superfamily. Histone-lysine methyltransferase family. Suvar3-9 subfamily.

It is found in the nucleus. The protein resides in the chromosome. It localises to the centromere. The catalysed reaction is L-lysyl(9)-[histone H3] + 3 S-adenosyl-L-methionine = N(6),N(6),N(6)-trimethyl-L-lysyl(9)-[histone H3] + 3 S-adenosyl-L-homocysteine + 3 H(+). In terms of biological role, histone methyltransferase that specifically trimethylates 'Lys-9' of histone H3 using monomethylated H3 'Lys-9' as substrate. H3 'Lys-9' trimethylation represents a specific tag for epigenetic transcriptional repression by recruiting HP1 (CBX1, CBX3 and/or CBX5) proteins to methylated histones. Mainly functions in heterochromatin regions, thereby playing a central role in the establishment of constitutive heterochromatin at pericentric and telomere regions. H3 'Lys-9' trimethylation is also required to direct DNA methylation at pericentric repeats. SUV39H1 is targeted to histone H3 via its interaction with RB1 and is involved in many processes. In Xenopus tropicalis (Western clawed frog), this protein is Histone-lysine N-methyltransferase SUV39H2 (suv39h2).